The following is a 220-amino-acid chain: Pyridoxine/pyridoxamine 5'-phosphate oxidase (220 aa).

FMN contacts are provided by residues 69–74 (RVVLLK), 84–85 (YT), Arg90, Lys91, and Gln113. Lys74 contacts substrate. Residues Tyr131, Arg135, and Ser139 each contribute to the substrate site. FMN-binding positions include 148–149 (QS) and Trp193. Residue 199–201 (RLH) coordinates substrate. Position 203 (Arg203) interacts with FMN.

This sequence belongs to the pyridoxamine 5'-phosphate oxidase family. As to quaternary structure, homodimer. The cofactor is FMN.

The enzyme catalyses pyridoxamine 5'-phosphate + O2 + H2O = pyridoxal 5'-phosphate + H2O2 + NH4(+). It catalyses the reaction pyridoxine 5'-phosphate + O2 = pyridoxal 5'-phosphate + H2O2. It functions in the pathway cofactor metabolism; pyridoxal 5'-phosphate salvage; pyridoxal 5'-phosphate from pyridoxamine 5'-phosphate: step 1/1. It participates in cofactor metabolism; pyridoxal 5'-phosphate salvage; pyridoxal 5'-phosphate from pyridoxine 5'-phosphate: step 1/1. Functionally, catalyzes the oxidation of either pyridoxine 5'-phosphate (PNP) or pyridoxamine 5'-phosphate (PMP) into pyridoxal 5'-phosphate (PLP). This chain is Pyridoxine/pyridoxamine 5'-phosphate oxidase, found in Myxococcus xanthus.